We begin with the raw amino-acid sequence, 88 residues long: MVSKEQKLALIKEFGGDEKNTGLAEVQIAILTAEISNLTEHLKMHKKDIPTRRTLLKKVAQRRHFLDYLVKKDVNRYKEVIGKLGIRK.

Belongs to the universal ribosomal protein uS15 family. As to quaternary structure, part of the 30S ribosomal subunit. Forms a bridge to the 50S subunit in the 70S ribosome, contacting the 23S rRNA.

Functionally, one of the primary rRNA binding proteins, it binds directly to 16S rRNA where it helps nucleate assembly of the platform of the 30S subunit by binding and bridging several RNA helices of the 16S rRNA. Its function is as follows. Forms an intersubunit bridge (bridge B4) with the 23S rRNA of the 50S subunit in the ribosome. This is Small ribosomal subunit protein uS15 from Mycoplasma mycoides subsp. mycoides SC (strain CCUG 32753 / NCTC 10114 / PG1).